The following is a 142-amino-acid chain: Hemoglobin subunit alpha-A (142 aa).

Residues 2-142 (VLSAADKGNV…VATVLTAKYR (141 aa)) form the Globin domain. Residue histidine 59 participates in O2 binding. Histidine 88 is a binding site for heme b.

Belongs to the globin family. In terms of assembly, heterotetramer of two alpha chains and two beta chains. As to expression, red blood cells.

Functionally, involved in oxygen transport from the lung to the various peripheral tissues. The polypeptide is Hemoglobin subunit alpha-A (HBAA) (Anseranas semipalmata (Magpie goose)).